The primary structure comprises 287 residues: Aquaporin PIP1-2 (287 aa).

The segment at 1–37 (MEGKEEDVRLGANKFTERQPIGTAAQSQDKDYKEPPP) is disordered. Residues 1 to 55 (MEGKEEDVRLGANKFTERQPIGTAAQSQDKDYKEPPPAPLFEPGELSSWSFYRAG) are Cytoplasmic-facing. The helical transmembrane segment at 56-76 (IAEFVATFLFLYITILTVMGV) threads the bilayer. Residues 77 to 89 (VKSSTKCSTVGIQ) are Extracellular-facing. A helical membrane pass occupies residues 90–110 (GIAWAFGGMIFALVYCTAGIS). The Cytoplasmic segment spans residues 111–133 (GGHINPAVTFGLFLARKLSLTRA). The NPA 1 signature appears at 115–117 (NPA). Residues 134–154 (LFYMVMQCLGAICGAGVVKGF) form a helical membrane-spanning segment. Residues 155–175 (QKGLYENNGGGANVVAPGYTK) are Extracellular-facing. Residues 176 to 196 (GDGLGAEIVGTFILVYTVFSA) traverse the membrane as a helical segment. Topologically, residues 197-209 (TDAKRSARDSHVP) are cytoplasmic. Residues 210-230 (ILAPLPIGFAVFLVHLATIPI) form a helical membrane-spanning segment. The Extracellular portion of the chain corresponds to 231–257 (TGTGINPARSLGAAIIYNKGHAWDDHW). The NPA 2 motif lies at 236–238 (NPA). A helical transmembrane segment spans residues 258-278 (IFWVGPFIGAALAALYHQVVI). At 279-287 (RAIPFKSRS) the chain is on the cytoplasmic side.

This sequence belongs to the MIP/aquaporin (TC 1.A.8) family. PIP (TC 1.A.8.11) subfamily. Barely detectable in roots, leaves and fruits.

It is found in the cell membrane. In terms of biological role, water channel required to facilitate the transport of water across cell membrane; mercury-insensitive. Contributes to the tolerance to multiple abiotic stresses including salt (NaCl), cold and water deprivation, by modulating cytosolic K(+)/Na(+) ratio, maintaining osmotic balance, and reducing membrane injury (e.g. oxidative injury). This Musa acuminata subsp. malaccensis (Wild banana) protein is Aquaporin PIP1-2.